The sequence spans 1040 residues: uncharacterized protein (1040 aa).

The region spanning 403-588 is the Helicase ATP-binding domain; it reads RLEESSKKGG…YSLIKFLRIK (186 aa). Residue 416–423 participates in ATP binding; that stretch reads DDMGLGKT. The segment at 746–798 adopts an RING-type zinc-finger fold; the sequence is CSLCMDVVAELLIIVPCGHFLCRECLTHVITSSEDMAKQTSNENISPKCSVCE. A Helicase C-terminal domain is found at 866-1032; it reads KIEKALNAVK…ISRLNTKELS (167 aa).

Belongs to the SNF2/RAD54 helicase family.

It localises to the nucleus. This is an uncharacterized protein from Schizosaccharomyces pombe (strain 972 / ATCC 24843) (Fission yeast).